A 394-amino-acid polypeptide reads, in one-letter code: Guanine nucleotide-binding protein G(s) subunit alpha (394 aa).

Residues 1–23 (MGCLGNSKTEDQRNEEKAQREAN) are disordered. Glycine 2 carries the N-palmitoyl glycine lipid modification. A lipid anchor (S-palmitoyl cysteine) is attached at cysteine 3. Over residues 8 to 23 (KTEDQRNEEKAQREAN) the composition is skewed to basic and acidic residues. A G-alpha domain is found at 39–394 (ATHRLLLLGA…RMHLRQYELL (356 aa)). The tract at residues 42–55 (RLLLLGAGESGKST) is G1 motif. 47 to 55 (GAGESGKST) serves as a coordination point for GTP. Serine 54 provides a ligand contact to Mg(2+). Residues 68–91 (FNGEGGEEDPQAARSNSDGEKATK) are disordered. Residues 196–204 (DLLRCRVLT) form a G2 motif region. Residues 197 to 204 (LLRCRVLT), 223 to 227 (DVGGQ), 292 to 295 (NKQD), and alanine 366 each bind GTP. Threonine 204 lines the Mg(2+) pocket. Residues 219-228 (FHMFDVGGQR) form a G3 motif region. The G4 motif stretch occupies residues 288–295 (ILFLNKQD). The segment at 364–369 (TCAVDT) is G5 motif.

This sequence belongs to the G-alpha family. G(s) subfamily. As to quaternary structure, heterotrimeric G proteins are composed of 3 units; alpha, beta and gamma. The alpha chain contains the guanine nucleotide binding site. Interacts with CRY1; the interaction may block GPCR-mediated regulation of cAMP concentrations. Interacts with ADCY6 and stimulates its adenylyl cyclase activity. Interacts with ADCY2 and ADCY5. Stimulates the ADCY5 adenylyl cyclase activity. Interaction with SASH1.

The protein resides in the cell membrane. In terms of biological role, guanine nucleotide-binding proteins (G proteins) function as transducers in numerous signaling pathways controlled by G protein-coupled receptors (GPCRs). Signaling involves the activation of adenylyl cyclases, resulting in increased levels of the signaling molecule cAMP. GNAS functions downstream of several GPCRs, including beta-adrenergic receptors. Stimulates the Ras signaling pathway via RAPGEF2. In Canis lupus familiaris (Dog), this protein is Guanine nucleotide-binding protein G(s) subunit alpha (GNAS).